The primary structure comprises 609 residues: MFS siderochrome iron transporter 1 (609 aa).

Basic and acidic residues-rich tracts occupy residues 1–17 and 25–34; these read MSALTKIREGLAREDNT and PHEKEIHETP. A disordered region spans residues 1–69; that stretch reads MSALTKIREG…NDSDVPSEDV (69 aa). 14 helical membrane passes run 81–101, 125–145, 154–174, 182–202, 220–240, 245–265, 300–320, 329–349, 368–390, 407–427, 432–452, 469–489, 496–516, and 573–593; these read LTWGKGSLAALLCLIWTLFLI, LMTTIPIVSDAMTAACYIPMA, AEGFLLMSGFATLGLILMAVS, AAQVFYSVGWGGMIYAVGVLA, SPYMITAFAGSKAAAAFVIDV, WGFGWIALVLPCVTIPLFLVL, VIGIFLFGGGLVVFLLPFNLA, TGYIIAMIIVGFCTLIFFGVW, SVVAACMIDLTYQVSYYTWNYFF, YVNSTFQVVSGVLLFIVGFLI, FYKWTFYFAVPIYIFALGLMI, IFISIGGAVFILVMQLAVLAA, AAALATLYVAGGVGGAVGGAI, and IRMLAAGVGIASLFFIWVPML.

It belongs to the major facilitator superfamily.

It localises to the cell membrane. Its function is as follows. Major facilitator transporter involved in extracellular siderophore uptake. Gibberella zeae produces extracellular coprogen-type siderophores as well as the intracellular siderophore ferricrocin. The role of extracellular siderophores is to supply iron to the fungus during plant infection, and the intracellular ferricrocin is required for intracellular iron distribution and storage with a crucial role in ascus and ascospore development. This chain is MFS siderochrome iron transporter 1, found in Gibberella zeae (strain ATCC MYA-4620 / CBS 123657 / FGSC 9075 / NRRL 31084 / PH-1) (Wheat head blight fungus).